The sequence spans 65 residues: Large ribosomal subunit protein bL35 (65 aa).

The interval 1 to 22 (MPKMKTKSSAKKRFKVTGSGKI) is disordered.

The protein belongs to the bacterial ribosomal protein bL35 family.

This Flavobacterium psychrophilum (strain ATCC 49511 / DSM 21280 / CIP 103535 / JIP02/86) protein is Large ribosomal subunit protein bL35.